A 327-amino-acid polypeptide reads, in one-letter code: Spermidine/putrescine import ATP-binding protein PotA (327 aa).

An ABC transporter domain is found at 5–235 (IKVEAVEKHF…PKTLFVATFI (231 aa)). 37–44 (GPSGCGKT) provides a ligand contact to ATP.

The protein belongs to the ABC transporter superfamily. Spermidine/putrescine importer (TC 3.A.1.11.1) family. As to quaternary structure, the complex is composed of two ATP-binding proteins (PotA), two transmembrane proteins (PotB and PotC) and a solute-binding protein (PotD).

The protein localises to the cell membrane. It catalyses the reaction ATP + H2O + polyamine-[polyamine-binding protein]Side 1 = ADP + phosphate + polyamineSide 2 + [polyamine-binding protein]Side 1.. Its function is as follows. Part of the ABC transporter complex PotABCD involved in spermidine/putrescine import. Responsible for energy coupling to the transport system. This Bacillus thuringiensis subsp. konkukian (strain 97-27) protein is Spermidine/putrescine import ATP-binding protein PotA.